The following is a 227-amino-acid chain: Adapter protein MecA 1 (227 aa).

This sequence belongs to the MecA family. As to quaternary structure, homodimer.

In terms of biological role, enables the recognition and targeting of unfolded and aggregated proteins to the ClpC protease or to other proteins involved in proteolysis. Acts negatively in the development of competence by binding ComK and recruiting it to the ClpCP protease. When overexpressed, inhibits sporulation. Also involved in Spx degradation by ClpC. The sequence is that of Adapter protein MecA 1 (mecA1) from Bacillus cereus (strain ATCC 14579 / DSM 31 / CCUG 7414 / JCM 2152 / NBRC 15305 / NCIMB 9373 / NCTC 2599 / NRRL B-3711).